A 326-amino-acid polypeptide reads, in one-letter code: Phospho-N-acetylmuramoyl-pentapeptide-transferase (326 aa).

9 helical membrane-spanning segments follow: residues 3–23 (ISIS…PAFI), 51–71 (TMGG…LALF), 79–99 (VGMI…DDFL), 115–135 (LALQ…GGDM), 138–158 (VFSY…FWLV), 169–189 (GIDG…GVIA), 195–215 (MDIL…FVFN), 221–243 (VFMG…MALH), and 306–326 (FFFW…LYLM).

This sequence belongs to the glycosyltransferase 4 family. MraY subfamily. Requires Mg(2+) as cofactor.

It localises to the cell membrane. The catalysed reaction is UDP-N-acetyl-alpha-D-muramoyl-L-alanyl-gamma-D-glutamyl-L-lysyl-D-alanyl-D-alanine + di-trans,octa-cis-undecaprenyl phosphate = Mur2Ac(oyl-L-Ala-gamma-D-Glu-L-Lys-D-Ala-D-Ala)-di-trans,octa-cis-undecaprenyl diphosphate + UMP. Its pathway is cell wall biogenesis; peptidoglycan biosynthesis. Catalyzes the initial step of the lipid cycle reactions in the biosynthesis of the cell wall peptidoglycan: transfers peptidoglycan precursor phospho-MurNAc-pentapeptide from UDP-MurNAc-pentapeptide onto the lipid carrier undecaprenyl phosphate, yielding undecaprenyl-pyrophosphoryl-MurNAc-pentapeptide, known as lipid I. This is Phospho-N-acetylmuramoyl-pentapeptide-transferase from Streptococcus pneumoniae (strain ATCC 700669 / Spain 23F-1).